The chain runs to 572 residues: Urease subunit alpha (572 aa).

The Urease domain maps to 134–572; the sequence is AGIDSHIHLI…ASMNQRYFFG (439 aa). Ni(2+)-binding residues include histidine 139, histidine 141, and lysine 222. An N6-carboxylysine modification is found at lysine 222. Histidine 224 lines the substrate pocket. 2 residues coordinate Ni(2+): histidine 251 and histidine 277. Catalysis depends on histidine 325, which acts as the Proton donor. Aspartate 365 contacts Ni(2+).

This sequence belongs to the metallo-dependent hydrolases superfamily. Urease alpha subunit family. Heterotrimer of UreA (gamma), UreB (beta) and UreC (alpha) subunits. Three heterotrimers associate to form the active enzyme. Ni cation serves as cofactor. Post-translationally, carboxylation allows a single lysine to coordinate two nickel ions.

The protein localises to the cytoplasm. The enzyme catalyses urea + 2 H2O + H(+) = hydrogencarbonate + 2 NH4(+). It functions in the pathway nitrogen metabolism; urea degradation; CO(2) and NH(3) from urea (urease route): step 1/1. The polypeptide is Urease subunit alpha (Yersinia pseudotuberculosis serotype O:1b (strain IP 31758)).